The sequence spans 276 residues: Lipoyl synthase (276 aa).

7 residues coordinate [4Fe-4S] cluster: Cys-27, Cys-32, Cys-38, Cys-53, Cys-57, Cys-60, and Ser-266. Residues 39-255 (FGNKTATFMI…EEIGYEMGFK (217 aa)) enclose the Radical SAM core domain.

This sequence belongs to the radical SAM superfamily. Lipoyl synthase family. [4Fe-4S] cluster serves as cofactor.

Its subcellular location is the cytoplasm. It carries out the reaction [[Fe-S] cluster scaffold protein carrying a second [4Fe-4S](2+) cluster] + N(6)-octanoyl-L-lysyl-[protein] + 2 oxidized [2Fe-2S]-[ferredoxin] + 2 S-adenosyl-L-methionine + 4 H(+) = [[Fe-S] cluster scaffold protein] + N(6)-[(R)-dihydrolipoyl]-L-lysyl-[protein] + 4 Fe(3+) + 2 hydrogen sulfide + 2 5'-deoxyadenosine + 2 L-methionine + 2 reduced [2Fe-2S]-[ferredoxin]. Its pathway is protein modification; protein lipoylation via endogenous pathway; protein N(6)-(lipoyl)lysine from octanoyl-[acyl-carrier-protein]: step 2/2. Functionally, catalyzes the radical-mediated insertion of two sulfur atoms into the C-6 and C-8 positions of the octanoyl moiety bound to the lipoyl domains of lipoate-dependent enzymes, thereby converting the octanoylated domains into lipoylated derivatives. This chain is Lipoyl synthase, found in Aquifex aeolicus (strain VF5).